Here is a 220-residue protein sequence, read N- to C-terminus: MKNQNTPIAFEGFPFIAGFAALTLLTALSAGKLCSAILYGFSALFALLTLFSLYFFRNPQRTPPADERAVVAPADGTVIVVDRVPVTPLGHEALKISIFMSVFNVHVNRVPFSGRVVELTHTPGKFFDVRDSRSSCENERSTIVLETVSGLRMAFVQVAGLIARRIVCYARNGEMLERGKRYGLIRFGSRLDVYLPPDVQPLVKLGDKTIAGETVLGRLG.

Ser-189 functions as the Schiff-base intermediate with substrate; via pyruvic acid in the catalytic mechanism. The residue at position 189 (Ser-189) is a Pyruvic acid (Ser); by autocatalysis.

Belongs to the phosphatidylserine decarboxylase family. PSD-A subfamily. As to quaternary structure, heterodimer of a large membrane-associated beta subunit and a small pyruvoyl-containing alpha subunit. The cofactor is pyruvate. Is synthesized initially as an inactive proenzyme. Formation of the active enzyme involves a self-maturation process in which the active site pyruvoyl group is generated from an internal serine residue via an autocatalytic post-translational modification. Two non-identical subunits are generated from the proenzyme in this reaction, and the pyruvate is formed at the N-terminus of the alpha chain, which is derived from the carboxyl end of the proenzyme. The post-translation cleavage follows an unusual pathway, termed non-hydrolytic serinolysis, in which the side chain hydroxyl group of the serine supplies its oxygen atom to form the C-terminus of the beta chain, while the remainder of the serine residue undergoes an oxidative deamination to produce ammonia and the pyruvoyl prosthetic group on the alpha chain.

The protein resides in the cell membrane. The enzyme catalyses a 1,2-diacyl-sn-glycero-3-phospho-L-serine + H(+) = a 1,2-diacyl-sn-glycero-3-phosphoethanolamine + CO2. Its pathway is phospholipid metabolism; phosphatidylethanolamine biosynthesis; phosphatidylethanolamine from CDP-diacylglycerol: step 2/2. Functionally, catalyzes the formation of phosphatidylethanolamine (PtdEtn) from phosphatidylserine (PtdSer). This chain is Phosphatidylserine decarboxylase proenzyme, found in Pelobacter propionicus (strain DSM 2379 / NBRC 103807 / OttBd1).